The following is a 364-amino-acid chain: MAGESTQVDLSVKAIGWGAKDASGILHPIKFSRRTPGERDVKIRVLYCGVCNFDMEMVRNKWGFTRYPYVFGHETAGEVVEVGSKVQKFKVGDKVAVGCMVGSCGKCYNCENGMENYCPEPNMADGSVYREQGERSYGGCSNVMVVDEKFVLRWPENLPQDTGVPLLCAGVVVYSPMKYMGLDKPGKHIGVFGLGGLGSVAVKFIKAFGGKATVISTSRRKEKEAIEEHGADAFVVNSDTEQLQALAGTMDGVVDTTPGGRTPMSLMLNLLKFDGSLILVGAPETLFELPVQPLILGRRKIIGSSTGGLKEYQEMLDFAAKHNILCDTEVIGIDYLSTAMERIKNLDVKYRFAIDIGNTLKYEE.

An Enoyl reductase (ER) domain is found at Gly24 to Ile343. Cys51 is a Zn(2+) binding site. NADP(+) is bound at residue Asn52. Positions 73, 74, 104, 107, 110, 118, and 168 each coordinate Zn(2+). Residues Leu194, Gly196, Leu197, Ser216, Thr217, Ser218, Lys221, Arg261, Val280, Ala282, Ser304, Thr306, and Arg351 each coordinate NADP(+).

Belongs to the zinc-containing alcohol dehydrogenase family. Class-III subfamily. As to quaternary structure, homodimer. Zn(2+) is required as a cofactor.

The catalysed reaction is (19E)-geissoschizine + NADP(+) = 4,21-dehydrogeissoschizine + NADPH. The enzyme catalyses (19E)-geissoschizine + NADPH + H(+) = (16R,19E)-isositsirikine + NADP(+). It catalyses the reaction (19E)-geissoschizine + NADPH + H(+) = (16R,19Z)-isositsirikine + NADP(+). It functions in the pathway alkaloid biosynthesis. In terms of biological role, an alcohol dehydrogenase involved in the biosynthesis of seco-iridoid and derivatives monoterpenoid indole alkaloids natural products. Catalyzes the production of geissoschizine and its conversion to (16R)-E-isositsirikine and (16R)-Z-isositsirikine. This Alstonia scholaris (Dogbane) protein is Geissoschizine synthase.